A 1171-amino-acid chain; its full sequence is DNA-directed RNA polymerase subunit beta (1171 aa).

Belongs to the RNA polymerase beta chain family. The RNAP catalytic core consists of 2 alpha, 1 beta, 1 beta' and 1 omega subunit. When a sigma factor is associated with the core the holoenzyme is formed, which can initiate transcription.

It catalyses the reaction RNA(n) + a ribonucleoside 5'-triphosphate = RNA(n+1) + diphosphate. DNA-dependent RNA polymerase catalyzes the transcription of DNA into RNA using the four ribonucleoside triphosphates as substrates. This chain is DNA-directed RNA polymerase subunit beta, found in Corynebacterium efficiens (strain DSM 44549 / YS-314 / AJ 12310 / JCM 11189 / NBRC 100395).